We begin with the raw amino-acid sequence, 267 residues long: 4-hydroxy-tetrahydrodipicolinate reductase (267 aa).

NAD(+) is bound by residues 8 to 13 and D34; that span reads GAAGRM. R35 lines the NADP(+) pocket. NAD(+)-binding positions include 98–100 and 122–125; these read GTT and AANF. H155 acts as the Proton donor/acceptor in catalysis. Position 156 (H156) interacts with (S)-2,3,4,5-tetrahydrodipicolinate. The Proton donor role is filled by K159. 165-166 serves as a coordination point for (S)-2,3,4,5-tetrahydrodipicolinate; that stretch reads GT.

It belongs to the DapB family.

It localises to the cytoplasm. It catalyses the reaction (S)-2,3,4,5-tetrahydrodipicolinate + NAD(+) + H2O = (2S,4S)-4-hydroxy-2,3,4,5-tetrahydrodipicolinate + NADH + H(+). The enzyme catalyses (S)-2,3,4,5-tetrahydrodipicolinate + NADP(+) + H2O = (2S,4S)-4-hydroxy-2,3,4,5-tetrahydrodipicolinate + NADPH + H(+). It participates in amino-acid biosynthesis; L-lysine biosynthesis via DAP pathway; (S)-tetrahydrodipicolinate from L-aspartate: step 4/4. Its function is as follows. Catalyzes the conversion of 4-hydroxy-tetrahydrodipicolinate (HTPA) to tetrahydrodipicolinate. This is 4-hydroxy-tetrahydrodipicolinate reductase from Ectopseudomonas mendocina (strain ymp) (Pseudomonas mendocina).